The chain runs to 279 residues: Putative E3 ubiquitin-protein ligase C36B7.05c (279 aa).

The segment at 27-122 adopts an FYVE-type zinc-finger fold; it reads DDESAQCNNC…VCVNCRQQLS (96 aa). Zn(2+)-binding residues include C33, C36, C49, C52, C57, C60, C114, and C117. S200 is modified (phosphoserine). The RING-type; atypical zinc-finger motif lies at 230–273; the sequence is CIICFEEFAAGDRVARIEYCLCIFHLKCYRDWLSTGAAGCPVHA.

It is found in the cytoplasm. It localises to the nucleus. The protein localises to the endosome membrane. The protein resides in the vacuole membrane. The catalysed reaction is S-ubiquitinyl-[E2 ubiquitin-conjugating enzyme]-L-cysteine + [acceptor protein]-L-lysine = [E2 ubiquitin-conjugating enzyme]-L-cysteine + N(6)-ubiquitinyl-[acceptor protein]-L-lysine.. It functions in the pathway protein modification; protein ubiquitination. Functionally, functions as an E3 ubiquitin-protein ligase. Binds phospholipid vesicles containing phosphatidylinositol 3-phosphate. The polypeptide is Putative E3 ubiquitin-protein ligase C36B7.05c (Schizosaccharomyces pombe (strain 972 / ATCC 24843) (Fission yeast)).